A 409-amino-acid polypeptide reads, in one-letter code: 1-deoxy-D-xylulose 5-phosphate reductoisomerase (409 aa).

NADPH contacts are provided by Thr5, Gly6, Ser7, Ile8, Gly31, Asn33, and Asn122. Lys123 contacts 1-deoxy-D-xylulose 5-phosphate. Residue Glu124 coordinates NADPH. Residue Asp148 participates in Mn(2+) binding. 4 residues coordinate 1-deoxy-D-xylulose 5-phosphate: Ser149, Glu150, Ser186, and His209. Glu150 provides a ligand contact to Mn(2+). Gly215 contributes to the NADPH binding site. 1-deoxy-D-xylulose 5-phosphate contacts are provided by Ser222, Asn227, Lys228, and Glu231. Glu231 serves as a coordination point for Mn(2+).

This sequence belongs to the DXR family. Mg(2+) is required as a cofactor. Requires Mn(2+) as cofactor.

It carries out the reaction 2-C-methyl-D-erythritol 4-phosphate + NADP(+) = 1-deoxy-D-xylulose 5-phosphate + NADPH + H(+). It functions in the pathway isoprenoid biosynthesis; isopentenyl diphosphate biosynthesis via DXP pathway; isopentenyl diphosphate from 1-deoxy-D-xylulose 5-phosphate: step 1/6. Catalyzes the NADPH-dependent rearrangement and reduction of 1-deoxy-D-xylulose-5-phosphate (DXP) to 2-C-methyl-D-erythritol 4-phosphate (MEP). This chain is 1-deoxy-D-xylulose 5-phosphate reductoisomerase, found in Parasynechococcus marenigrum (strain WH8102).